The chain runs to 105 residues: Heat shock protein HspQ (105 aa).

The interval 80-105 (AHPEQPSLDELAASIRHQLQAPHLRN) is disordered.

This sequence belongs to the HspQ family.

It is found in the cytoplasm. Involved in the degradation of certain denaturated proteins, including DnaA, during heat shock stress. This Yersinia pseudotuberculosis serotype O:1b (strain IP 31758) protein is Heat shock protein HspQ.